A 344-amino-acid polypeptide reads, in one-letter code: RNA 3'-terminal phosphate cyclase (344 aa).

ATP is bound by residues Gln103 and 283-287 (HLADQ). His308 functions as the Tele-AMP-histidine intermediate in the catalytic mechanism.

This sequence belongs to the RNA 3'-terminal cyclase family. Type 1 subfamily.

It is found in the cytoplasm. The catalysed reaction is a 3'-end 3'-phospho-ribonucleotide-RNA + ATP = a 3'-end 2',3'-cyclophospho-ribonucleotide-RNA + AMP + diphosphate. Its function is as follows. Catalyzes the conversion of 3'-phosphate to a 2',3'-cyclic phosphodiester at the end of RNA. The mechanism of action of the enzyme occurs in 3 steps: (A) adenylation of the enzyme by ATP; (B) transfer of adenylate to an RNA-N3'P to produce RNA-N3'PP5'A; (C) and attack of the adjacent 2'-hydroxyl on the 3'-phosphorus in the diester linkage to produce the cyclic end product. The biological role of this enzyme is unknown but it is likely to function in some aspects of cellular RNA processing. In Salmonella paratyphi C (strain RKS4594), this protein is RNA 3'-terminal phosphate cyclase.